The following is a 200-amino-acid chain: Methylthioribulose-1-phosphate dehydratase-like protein (200 aa).

The protein belongs to the aldolase class II family. MtnB subfamily.

The chain is Methylthioribulose-1-phosphate dehydratase-like protein from Schizosaccharomyces pombe (strain 972 / ATCC 24843) (Fission yeast).